A 418-amino-acid chain; its full sequence is Gamma-glutamyl phosphate reductase (418 aa).

Belongs to the gamma-glutamyl phosphate reductase family.

The protein resides in the cytoplasm. It catalyses the reaction L-glutamate 5-semialdehyde + phosphate + NADP(+) = L-glutamyl 5-phosphate + NADPH + H(+). Its pathway is amino-acid biosynthesis; L-proline biosynthesis; L-glutamate 5-semialdehyde from L-glutamate: step 2/2. Catalyzes the NADPH-dependent reduction of L-glutamate 5-phosphate into L-glutamate 5-semialdehyde and phosphate. The product spontaneously undergoes cyclization to form 1-pyrroline-5-carboxylate. The polypeptide is Gamma-glutamyl phosphate reductase (Nitrosococcus oceani (strain ATCC 19707 / BCRC 17464 / JCM 30415 / NCIMB 11848 / C-107)).